A 426-amino-acid chain; its full sequence is Glutamate-1-semialdehyde 2,1-aminomutase (426 aa).

Lys265 is subject to N6-(pyridoxal phosphate)lysine.

The protein belongs to the class-III pyridoxal-phosphate-dependent aminotransferase family. HemL subfamily. As to quaternary structure, homodimer. Pyridoxal 5'-phosphate serves as cofactor.

It localises to the cytoplasm. It carries out the reaction (S)-4-amino-5-oxopentanoate = 5-aminolevulinate. The protein operates within porphyrin-containing compound metabolism; protoporphyrin-IX biosynthesis; 5-aminolevulinate from L-glutamyl-tRNA(Glu): step 2/2. The protein is Glutamate-1-semialdehyde 2,1-aminomutase of Cellvibrio japonicus (strain Ueda107) (Pseudomonas fluorescens subsp. cellulosa).